The sequence spans 61 residues: Defensin-like peptide TXKs2 (61 aa).

The N-terminal stretch at 1–19 is a signal peptide; the sequence is MTYAILIIVSLLLISDRIS. The propeptide occupies 20–22; the sequence is NVV. 3 cysteine pairs are disulfide-bonded: C26–C47, C33–C56, and C37–C58.

This sequence belongs to the invertebrate defensin family. As to expression, expressed by the venom gland.

Its subcellular location is the secreted. Its function is as follows. Antibacterial protein. The protein is Defensin-like peptide TXKs2 of Olivierus martensii (Manchurian scorpion).